Consider the following 333-residue polypeptide: MYSLLRPLLFRLDAEKAHSLTLSLLHYLPGFYFRKIAGQPVHAMGLVFPHQVGLAAGLDKNGEHLDALAKLGFSFIELGTVTPKGQAGNPKPRLFRIAEANAIINRMGFNNSGVDVLVENVKRANYKGILGINIGKNKETNLNQAAEDYLYCFRKVYDHASYVTINISSPNTPDLRQLQQGDYFAELLTQLQKEQIKLADQYGRHVPLVVKVSPDETDETLKQMTDIILQYGIEGIIATNTTCSREMVKNLPCSEEQGGLSGRPLMELSTRCLRLLKQYVGNDVTLIGVGGIDSLESAKDKINAGASLLQVYSGLVYKGPELIHDIVSGLNAI.

FMN contacts are provided by residues 56 to 60 (AGLDK) and Thr80. Lys60 lines the substrate pocket. Residue 105-109 (NRMGF) coordinates substrate. The FMN site is built by Asn133 and Asn166. Asn166 is a substrate binding site. Catalysis depends on Ser169, which acts as the Nucleophile. Substrate is bound at residue Asn171. Residues Lys211 and Thr239 each contribute to the FMN site. 240–241 (NT) contributes to the substrate binding site. FMN-binding positions include Gly262, Gly291, and 312-313 (YS).

The protein belongs to the dihydroorotate dehydrogenase family. Type 2 subfamily. As to quaternary structure, monomer. The cofactor is FMN.

It localises to the cell membrane. It carries out the reaction (S)-dihydroorotate + a quinone = orotate + a quinol. It functions in the pathway pyrimidine metabolism; UMP biosynthesis via de novo pathway; orotate from (S)-dihydroorotate (quinone route): step 1/1. Functionally, catalyzes the conversion of dihydroorotate to orotate with quinone as electron acceptor. This chain is Dihydroorotate dehydrogenase (quinone), found in Legionella pneumophila (strain Corby).